Here is a 1054-residue protein sequence, read N- to C-terminus: Translation initiation factor IF-2 (1054 aa).

Disordered regions lie at residues 57-213, 225-248, 287-315, and 401-436; these read DKRK…AASC, DPLA…NPGD, SGRP…HGLQ, and DHAG…KQEL. Positions 92–104 are enriched in polar residues; that stretch reads QEPSQAASDVSSP. Residues 111-213 show a composition bias toward low complexity; sequence EASGAEAAAS…VTSGRRAASC (103 aa). The segment covering 401–418 has biased composition (basic and acidic residues); the sequence is DHAGRGRELVDVSKNKDK. In terms of domain architecture, tr-type G spans 552-721; it reads TRPPVVTVMG…VLQAEVLELT (170 aa). The G1 stretch occupies residues 561–568; the sequence is GHVDHGKT. 561–568 is a GTP binding site; the sequence is GHVDHGKT. The tract at residues 586–590 is G2; sequence GITQH. Positions 607–610 are G3; sequence DTPG. GTP contacts are provided by residues 607 to 611 and 661 to 664; these read DTPGH and NKMD. The segment at 661 to 664 is G4; it reads NKMD. The segment at 697 to 699 is G5; that stretch reads SAK.

The protein belongs to the TRAFAC class translation factor GTPase superfamily. Classic translation factor GTPase family. IF-2 subfamily.

Its subcellular location is the cytoplasm. Its function is as follows. One of the essential components for the initiation of protein synthesis. Protects formylmethionyl-tRNA from spontaneous hydrolysis and promotes its binding to the 30S ribosomal subunits. Also involved in the hydrolysis of GTP during the formation of the 70S ribosomal complex. The sequence is that of Translation initiation factor IF-2 (infB) from Stigmatella aurantiaca.